Consider the following 220-residue polypeptide: Deoxyribose-phosphate aldolase (220 aa).

D89 serves as the catalytic Proton donor/acceptor. Residue K151 is the Schiff-base intermediate with acetaldehyde of the active site. Catalysis depends on K180, which acts as the Proton donor/acceptor.

Belongs to the DeoC/FbaB aldolase family. DeoC type 1 subfamily.

It is found in the cytoplasm. The enzyme catalyses 2-deoxy-D-ribose 5-phosphate = D-glyceraldehyde 3-phosphate + acetaldehyde. Its pathway is carbohydrate degradation; 2-deoxy-D-ribose 1-phosphate degradation; D-glyceraldehyde 3-phosphate and acetaldehyde from 2-deoxy-alpha-D-ribose 1-phosphate: step 2/2. Functionally, catalyzes a reversible aldol reaction between acetaldehyde and D-glyceraldehyde 3-phosphate to generate 2-deoxy-D-ribose 5-phosphate. This is Deoxyribose-phosphate aldolase from Streptococcus mutans serotype c (strain ATCC 700610 / UA159).